We begin with the raw amino-acid sequence, 421 residues long: D-amino-acid oxidase (421 aa).

FAD is bound by residues A12, G13, A14, V15, G47, G64, I65, K225, A226, R359, G385, G388, and L389. Residue R359 coordinates D-proline. R359 lines the D-serine pocket.

The protein belongs to the DAMOX/DASOX family. FAD serves as cofactor.

Its subcellular location is the cytoplasm. It is found in the secreted. The protein resides in the cell wall. It carries out the reaction a D-alpha-amino acid + O2 + H2O = a 2-oxocarboxylate + H2O2 + NH4(+). In terms of biological role, catalyzes the oxidative deamination of D-amino acids with broad substrate specificity. The chain is D-amino-acid oxidase from Bradyrhizobium diazoefficiens (strain JCM 10833 / BCRC 13528 / IAM 13628 / NBRC 14792 / USDA 110).